A 200-amino-acid chain; its full sequence is Glycerol-3-phosphate acyltransferase (200 aa).

5 helical membrane-spanning segments follow: residues Met-1–Gly-21, Gly-53–Ala-73, Trp-81–Gly-101, Met-114–Ile-134, and Ile-139–Gly-159.

Belongs to the PlsY family. In terms of assembly, probably interacts with PlsX.

Its subcellular location is the cell inner membrane. The catalysed reaction is an acyl phosphate + sn-glycerol 3-phosphate = a 1-acyl-sn-glycero-3-phosphate + phosphate. It functions in the pathway lipid metabolism; phospholipid metabolism. In terms of biological role, catalyzes the transfer of an acyl group from acyl-phosphate (acyl-PO(4)) to glycerol-3-phosphate (G3P) to form lysophosphatidic acid (LPA). This enzyme utilizes acyl-phosphate as fatty acyl donor, but not acyl-CoA or acyl-ACP. This Synechococcus sp. (strain CC9902) protein is Glycerol-3-phosphate acyltransferase.